Here is a 712-residue protein sequence, read N- to C-terminus: 3',5'-cyclic-AMP phosphodiesterase 4C (712 aa).

Disordered stretches follow at residues 1–31 and 45–64; these read MENL…APKH and RFYS…LSPR. The span at 17–31 shows a compositional bias: basic residues; the sequence is SRSRGRHSMTRAPKH. The segment covering 48-64 has biased composition (basic and acidic residues); that stretch reads SDPDKSAGCRERDLSPR. S73 carries the phosphoserine modification. The interval 181–200 is disordered; that stretch reads AKQGPVGNPSSSNQLPPAED. The PDEase domain maps to 312–641; sequence VQTDQEEQLA…EWYQSKIPRS (330 aa). H388 acts as the Proton donor in catalysis. H388 serves as a coordination point for 3',5'-cyclic AMP. Positions 388 and 392 each coordinate AMP. H392, H428, D429, and D546 together coordinate Zn(2+). The AMP site is built by D429, D546, Q597, and F600. Residue D429 coordinates Mg(2+). D429 is a Mn(2+) binding site. 3',5'-cyclic AMP contacts are provided by Q597 and F600. Disordered stretches follow at residues 636–655 and 664–712; these read SKIP…GPDR and EAEE…NQRT. A Phosphoserine modification is found at S641. The span at 664-678 shows a compositional bias: acidic residues; that stretch reads EAEEEDEEEEEEGEE.

This sequence belongs to the cyclic nucleotide phosphodiesterase family. PDE4 subfamily. In terms of assembly, part of a complex containing AKAP5, ADCY5, ADCY6 and PKD2. Zn(2+) serves as cofactor. Mg(2+) is required as a cofactor. It depends on Mn(2+) as a cofactor. Expressed in various tissues but not in cells of the immune system.

The protein resides in the cell projection. It localises to the cilium. It catalyses the reaction 3',5'-cyclic AMP + H2O = AMP + H(+). Its pathway is purine metabolism; 3',5'-cyclic AMP degradation; AMP from 3',5'-cyclic AMP: step 1/1. With respect to regulation, inhibited by rolipram. Functionally, hydrolyzes the second messenger cAMP, which is a key regulator of many important physiological processes. The protein is 3',5'-cyclic-AMP phosphodiesterase 4C of Homo sapiens (Human).